A 353-amino-acid chain; its full sequence is Inactive metacaspase-4 (353 aa).

Glycine 2 is lipidated: N-myristoyl glycine.

It belongs to the peptidase C14B family. In terms of processing, palmitoylated. Post-translationally, proteolytic cleavage by MCA3 occurs prior or during secretion and requires MCA4 membrane localization. Cleavage is dispensable for secretion and parasite growth and virulence in the mammalian host. In vitro, can be cleaved by MCA2 but specifically cleaved by MCA3 in vivo.

It is found in the cell projection. Its subcellular location is the cilium. The protein resides in the flagellum membrane. It localises to the secreted. In terms of biological role, inactive metacaspase which plays a role in parasite bloodstream form growth and in parasite virulence within the mammalian host. This Trypanosoma brucei brucei protein is Inactive metacaspase-4.